The primary structure comprises 602 residues: FAD-binding monooxygenase hmp7 (602 aa).

FAD is bound by residues Thr-108 to Trp-111, Asp-120 to Val-121, and Tyr-126. Gln-118–Asp-120 serves as a coordination point for NADP(+). NADP(+)-binding positions include Thr-252–Gln-258 and Arg-275–Thr-276.

The protein belongs to the FAD-binding monooxygenase family. The cofactor is FAD.

The protein operates within secondary metabolite biosynthesis. Functionally, FAD-binding monooxygenase; part of the gene cluster that mediates the biosynthesis of hypothemycin, a resorcylic acid lactone (RAL) that irreversibly inhibits a subset of protein kinases with a conserved cysteine in the ATP binding site such as human ERK2. The first step is performed by both PKSs hmp3 and hmp8 and leads to the production of 7',8'-dehydrozearalenol (DHZ). The highly reducing PKS hpm8 synthesizes the reduced hexaketide (7S,11S,2E,8E)-7,11-dihydroxy-dodeca-2,8-dienoate, which is transferred downstream to the non-reducing PKS hpm3. Hpm3 then extends the reduced hexaketide to a nonaketide, after which regioselective cyclization and macrolactonization affords DHZ. The next step is the conversion of DHZ into aigialomycin C and is performed by the O-methyltransferase hmp5, the FAD-binding monooxygenase hmp7, and the cytochrome P450 monooxygenase hmp1. The wide substrate tolerance of the hmp5 and hmp7 implies that the reactions from DHZ to aigialomycin C can occur in any order. The steps from aigialomycin C to hypothemycin are less well established. The FAD-linked oxidoreductase hmp9 presumably catalyzes oxidation of the C-6' hydroxyl to a ketone. The timing of this oxidation is important, since the resulting enone functional group is a Michael acceptor that can react spontaneously with glutathione, an abundant metabolite in fungal cells. The glutathione S-transferase hmp2 catalyzes cis-trans isomerization of the 7',8' double bond with equilibrium favoring the trans isomer. The hpm6-encoded transporter might preferentially pump hypothemycin out of the cell relative to the trans isomer aigialomycin A. The cis-to-trans isomerization may be coupled with C-4' hydroxylation, since all known hypothemycin analogs containing the enone functional group also have hydroxyl groups at both C-4' and C-5'. The protein is FAD-binding monooxygenase hmp7 of Hypomyces subiculosus (Nectria subiculosa).